We begin with the raw amino-acid sequence, 113 residues long: CRISPR-associated endoribonuclease Cas2 2 (113 aa).

Position 32 (aspartate 32) interacts with Mg(2+).

Belongs to the CRISPR-associated endoribonuclease Cas2 protein family. As to quaternary structure, homodimer, forms a heterotetramer with a Cas1 homodimer. The cofactor is Mg(2+).

Its function is as follows. CRISPR (clustered regularly interspaced short palindromic repeat), is an adaptive immune system that provides protection against mobile genetic elements (viruses, transposable elements and conjugative plasmids). CRISPR clusters contain sequences complementary to antecedent mobile elements and target invading nucleic acids. CRISPR clusters are transcribed and processed into CRISPR RNA (crRNA). Functions as a ssRNA-specific endoribonuclease. Involved in the integration of spacer DNA into the CRISPR cassette. In Nitrosomonas europaea (strain ATCC 19718 / CIP 103999 / KCTC 2705 / NBRC 14298), this protein is CRISPR-associated endoribonuclease Cas2 2 (cas22).